The chain runs to 151 residues: MKQTTMISAKDTNKKWYIVDAENKTVGRLATQVALVLRGKHKVDFTPHINNGDHVIIINAEKAIFSGKKESNKFYYHHSMHPGGLKKRSVEVQRELDATKILERAIRLMLPKNVQGSNQYRALHVFKGSNHPFAAQKPEVLEISTKKGDVK.

The protein belongs to the universal ribosomal protein uL13 family. As to quaternary structure, part of the 50S ribosomal subunit.

In terms of biological role, this protein is one of the early assembly proteins of the 50S ribosomal subunit, although it is not seen to bind rRNA by itself. It is important during the early stages of 50S assembly. This chain is Large ribosomal subunit protein uL13, found in Mycoplasma mycoides subsp. mycoides SC (strain CCUG 32753 / NCTC 10114 / PG1).